Here is a 173-residue protein sequence, read N- to C-terminus: Ribosome maturation factor RimM (173 aa).

The PRC barrel domain occupies 90–169; it reads EDEYFWFDIL…RIDTKGAQDI (80 aa).

It belongs to the RimM family. As to quaternary structure, binds ribosomal protein uS19.

It localises to the cytoplasm. Its function is as follows. An accessory protein needed during the final step in the assembly of 30S ribosomal subunit, possibly for assembly of the head region. Essential for efficient processing of 16S rRNA. May be needed both before and after RbfA during the maturation of 16S rRNA. It has affinity for free ribosomal 30S subunits but not for 70S ribosomes. The polypeptide is Ribosome maturation factor RimM (Nitratiruptor sp. (strain SB155-2)).